A 313-amino-acid polypeptide reads, in one-letter code: MSIINTSYVEITTFFLVGMPGLEYAHIWISIPICSMYLIAILGNGTILFIIKTEPSLHEPMYYFLSMLAMSDLGLSLSSLPTVLSIFLFNAPEISSNACFAQEFFIHGFSVLESSVLLIMSFDRFLAIHNPLRYTSILTTVRVAQIGIVFSFKSMLLVLPFPFTLRNLRYCKKNQLSHSYCLHQDVMKLACSDNRIDVIYGFFGALCLMVDFILIAVSYTLILKTVLGIASKKEQLKALNTCVSHICAVIIFYLPIINLAVVHRFARHVSPLINVLMANVLLLVPPLTNPIVYCVKTKQIRVRVVAKLCQRKI.

Topologically, residues 1 to 27 are extracellular; the sequence is MSIINTSYVEITTFFLVGMPGLEYAHI. N-linked (GlcNAc...) asparagine glycosylation occurs at Asn-5. Residues 28 to 48 traverse the membrane as a helical segment; the sequence is WISIPICSMYLIAILGNGTIL. Residues 49-56 are Cytoplasmic-facing; it reads FIIKTEPS. A helical transmembrane segment spans residues 57–77; sequence LHEPMYYFLSMLAMSDLGLSL. The Extracellular segment spans residues 78–101; sequence SSLPTVLSIFLFNAPEISSNACFA. Cys-99 and Cys-191 form a disulfide bridge. A helical transmembrane segment spans residues 102–122; it reads QEFFIHGFSVLESSVLLIMSF. Over 123 to 141 the chain is Cytoplasmic; it reads DRFLAIHNPLRYTSILTTV. A helical transmembrane segment spans residues 142–162; sequence RVAQIGIVFSFKSMLLVLPFP. Topologically, residues 163–198 are extracellular; it reads FTLRNLRYCKKNQLSHSYCLHQDVMKLACSDNRIDV. The chain crosses the membrane as a helical span at residues 199 to 218; sequence IYGFFGALCLMVDFILIAVS. At 219–238 the chain is on the cytoplasmic side; the sequence is YTLILKTVLGIASKKEQLKA. A helical transmembrane segment spans residues 239-259; that stretch reads LNTCVSHICAVIIFYLPIINL. Residues 260–274 lie on the Extracellular side of the membrane; it reads AVVHRFARHVSPLIN. A helical transmembrane segment spans residues 275 to 295; that stretch reads VLMANVLLLVPPLTNPIVYCV. The Cytoplasmic segment spans residues 296 to 313; the sequence is KTKQIRVRVVAKLCQRKI.

Belongs to the G-protein coupled receptor 1 family.

Its subcellular location is the cell membrane. In terms of biological role, odorant receptor. The sequence is that of Olfactory receptor 51A4 (OR51A4) from Homo sapiens (Human).